A 418-amino-acid chain; its full sequence is Tyrosine--tRNA ligase (418 aa).

Tyr-34 is an L-tyrosine binding site. The short motif at 39–48 (PTADSLHLGH) is the 'HIGH' region element. Positions 169 and 173 each coordinate L-tyrosine. The 'KMSKS' region motif lies at 229 to 233 (KFGKS). Position 232 (Lys-232) interacts with ATP. Residues 352 to 418 (NNIVELLVSS…GKKKYFVLTY (67 aa)) form the S4 RNA-binding domain.

It belongs to the class-I aminoacyl-tRNA synthetase family. TyrS type 1 subfamily. As to quaternary structure, homodimer.

The protein localises to the cytoplasm. It catalyses the reaction tRNA(Tyr) + L-tyrosine + ATP = L-tyrosyl-tRNA(Tyr) + AMP + diphosphate + H(+). Functionally, catalyzes the attachment of tyrosine to tRNA(Tyr) in a two-step reaction: tyrosine is first activated by ATP to form Tyr-AMP and then transferred to the acceptor end of tRNA(Tyr). This Streptococcus pneumoniae (strain ATCC BAA-255 / R6) protein is Tyrosine--tRNA ligase.